The following is a 932-amino-acid chain: Isoleucine--tRNA ligase (932 aa).

The short motif at 58 to 68 (PYANGDIHIGH) is the 'HIGH' region element. L-isoleucyl-5'-AMP is bound at residue Glu-559. Positions 600–604 (KMSKS) match the 'KMSKS' region motif. Lys-603 contributes to the ATP binding site. Residues Cys-895, Cys-898, Cys-915, and Cys-918 each contribute to the Zn(2+) site.

Belongs to the class-I aminoacyl-tRNA synthetase family. IleS type 1 subfamily. Monomer. It depends on Zn(2+) as a cofactor.

The protein resides in the cytoplasm. It carries out the reaction tRNA(Ile) + L-isoleucine + ATP = L-isoleucyl-tRNA(Ile) + AMP + diphosphate. Its function is as follows. Catalyzes the attachment of isoleucine to tRNA(Ile). As IleRS can inadvertently accommodate and process structurally similar amino acids such as valine, to avoid such errors it has two additional distinct tRNA(Ile)-dependent editing activities. One activity is designated as 'pretransfer' editing and involves the hydrolysis of activated Val-AMP. The other activity is designated 'posttransfer' editing and involves deacylation of mischarged Val-tRNA(Ile). The protein is Isoleucine--tRNA ligase of Saccharophagus degradans (strain 2-40 / ATCC 43961 / DSM 17024).